Consider the following 617-residue polypeptide: MAPPPLLPVAASTPILHGEFGSYPANGPRFALTLTTQALHIQRLRPKPEARPRDGLVSLDEVSGCGTLQSRSPEDTAAYFCIYTYPRGRRGGRRRATRTFRADGATTYEENRAEAQRWATALTCLLRGVPLSGDQEITPELLPRKPRLLILVNPFGGRGLAWQRCMDHVVPMISEAGLSFNLIQTERQNHARELVQGLSLSEWEGIVTVSGDGLLYEVLNGLLDRPDWEDAVRMPIGVLPCGSGNALAGAVNHHGGFEQVVGVDLLLNCSLLLCRGGSHPLDLLSVTLASGSRCFSFLSVAWGFLSDVDIHSERFRALGSARFTLGAVLGLASLHTYRGRLSYLPATTEPALPIPGHSLPRAKSELVLAPAPAPAATHSPLHRSVSDLPLPLPQPALVSPGSPEPLPDLSLNGGGPELTGDWGGAGDAPLSPDPLLPSSPNALKTAQLSPIAEGPPEMPASSGFLPPTHSAPEASTWGPVDHLLPPLGSPLPQDWVTIEGEFVLMLGILPSHLCADLMAAPHARFDDGVVHLCWVRSGISRAALLRILLAMEHGNHFSLGCPHLGYAAARAFRLEPLTPRGLLTVDGELVEYGPIQAQVHPGLATLLTGPAGQKPQA.

The interval 1–140 is required for binding to sulfatide and phosphoinositides and for membrane localization; the sequence is MAPPPLLPVA…LSGDQEITPE (140 aa). A Nuclear localization signal motif is present at residues 87 to 95; sequence RGRRGGRRR. In terms of domain architecture, DAGKc spans 143–290; that stretch reads PRKPRLLILV…LDLLSVTLAS (148 aa). Residues 153–155 and 185–189 contribute to the ATP site; these read NPF and TERQN. 210-213 contributes to the substrate binding site; sequence SGDG. Catalysis depends on D212, which acts as the Proton donor/acceptor. ATP-binding positions include E217 and 242–244; that span reads GSG. D309 serves as a coordination point for substrate. 2 residues coordinate ATP: R316 and R322. Phosphoserine occurs at positions 358 and 364. Positions 371-472 are disordered; the sequence is APAPAATHSP…GFLPPTHSAP (102 aa). The residue at position 377 (T377) is a Phosphothreonine. Residues 381 to 390 carry the Nuclear export signal motif; it reads LHRSVSDLPL. Phosphoserine occurs at positions 384 and 386. A compositionally biased stretch (gly residues) spans 412–426; it reads NGGGPELTGDWGGAG. T578 is modified (phosphothreonine). 586–588 lines the ATP pocket; the sequence is DGE.

Interacts with histone H3. Interacts with HDAC1, HDAC2, MBD2 and SIN3A. Interacts with EEF1A1; the interaction enhances SPHK2 kinase activity. Interacts with PHB2. Mg(2+) is required as a cofactor. Phosphorylated by PKD on Ser-384 and Ser-386 upon PMA treatment. Phosphorylation induces export from the nucleus to the cytoplasm. Phosphorylated by MAPK1 and MAPK2 at Thr-578, phosphorylation is induced by agonists such as EGF and PMA and increases kinase activity. In terms of processing, cleaved by CASP1 in apoptotic cells. The truncated form is released from cells. In terms of tissue distribution, expressed in heart, brain, liver, kidney and testis. Expressed by mast cells (at protein level). In the substantia nigra, expressed by dopaminergic neurons (at protein level).

It is found in the lysosome membrane. It localises to the cytoplasm. The protein localises to the cell membrane. The protein resides in the endoplasmic reticulum. Its subcellular location is the nucleus. It is found in the mitochondrion inner membrane. It carries out the reaction a sphingoid base + ATP = a sphingoid 1-phosphate + ADP + H(+). It catalyses the reaction sphing-4-enine + ATP = sphing-4-enine 1-phosphate + ADP + H(+). The catalysed reaction is sphinganine + ATP = sphinganine 1-phosphate + ADP + H(+). The enzyme catalyses (4R)-hydroxysphinganine + ATP = (4R)-hydroxysphinganine 1-phosphate + ADP + H(+). In terms of biological role, catalyzes the phosphorylation of sphingosine to form sphingosine-1-phosphate (SPP), a lipid mediator with both intra- and extracellular functions. Also acts on D-erythro-dihydrosphingosine, D-erythro-sphingosine and L-threo-dihydrosphingosine. Binds phosphoinositides. In contrast to prosurvival SPHK1, has a positive effect on intracellular ceramide levels, inhibits cells growth and enhances apoptosis. In mitochondria, is important for cytochrome-c oxidase assembly and mitochondrial respiration. The SPP produced in mitochondria binds PHB2 and modulates the regulation via PHB2 of complex IV assembly and respiration. In nucleus, plays a role in epigenetic regulation of gene expression. Interacts with HDAC1 and HDAC2 and, through SPP production, inhibits their enzymatic activity, preventing the removal of acetyl groups from lysine residues with histones. Up-regulates acetylation of histone H3-K9, histone H4-K5 and histone H2B-K12. In nucleus, may have an inhibitory effect on DNA synthesis and cell cycle. In mast cells, is the main regulator of SPP production which mediates calcium influx, NF-kappa-B activation, cytokine production, such as TNF and IL6, and degranulation of mast cells. In dopaminergic neurons, is involved in promoting mitochondrial functions regulating ATP and ROS levels. Also involved in the regulation of glucose and lipid metabolism. The polypeptide is Sphingosine kinase 2 (Mus musculus (Mouse)).